The chain runs to 342 residues: SWR1-complex protein 5 (342 aa).

Disordered stretches follow at residues 1–126 (MAPT…PVTI), 142–178 (PRTS…DPDS), and 214–238 (LGEN…RMPR). 2 stretches are compositionally biased toward acidic residues: residues 8–20 (LAED…DSDF) and 33–43 (ISDDDDEEAGE). The span at 78 to 87 (GEKRQKKTKT) shows a compositional bias: basic residues. The BCNT-C domain occupies 260–341 (NLSMASRLQA…RRARMAQAGK (82 aa)).

Belongs to the SWC5 family. As to quaternary structure, component of the SWR1 chromatin remodeling complex.

The protein localises to the nucleus. Component of the SWR1 complex which mediates the ATP-dependent exchange of histone H2A for the H2A variant H2A.Z leading to transcriptional regulation of selected genes by chromatin remodeling. Involved in chromosome stability. This chain is SWR1-complex protein 5 (crc-2), found in Neurospora crassa (strain ATCC 24698 / 74-OR23-1A / CBS 708.71 / DSM 1257 / FGSC 987).